The following is a 601-amino-acid chain: MAEKNSHIRNFSIIAHIDHGKSTLADRLLEHTGTVTKREAQAQFLDNMELERERGITIKAQTVRMKYRAQDGRDYELNLIDTPGHVDFAYEVSRSMAACEGAILVVDATQGVEAQTLANVYQALDHDLEIVPVINKIDLPSADVEGVRQEIEEVIGLDAKDAVPASAKEGIGIGEILEQIVHRVPAPEGDPDAPLKAIVFDSWYDSYRGVVMLVRVFEGTVRPKQKIRLWSNRKEFEVQELGVFAPFAKAVVELQAGEVGVVVANVKDVHDAKVGDTITDATRPTEEPFPGFKVVKPMVFSGVFPIEAADYEQLRDALEKLSLNDSAFTYEPETSQALGFGFRCGYLGLLHMEIVQERLEREYQLALITTAPSVVYRVTDTSGAVEEIDNPAKLPPVQKIAKLEEPHLTCHIHARTEDVGAILKLCQERRGLQRDLKYLGTKRVQITYDIPLAEVVFDFFDKLKSVSRGYASLDYELKGYEEADLVKLDILINGEPVDALSVIVHRERAYQRGRDLCQRLREVIPKQMYEVAIQAAIGAKVIARETVKAFRKNVLAKCYGGDISRKRKLLEKQKEGKKRMKQVGSVEIPQEAFLAVLKVEE.

The tr-type G domain maps to 6–188 (SHIRNFSIIA…QIVHRVPAPE (183 aa)). Residues 18 to 23 (DHGKST) and 135 to 138 (NKID) contribute to the GTP site.

Belongs to the TRAFAC class translation factor GTPase superfamily. Classic translation factor GTPase family. LepA subfamily.

Its subcellular location is the cell inner membrane. The catalysed reaction is GTP + H2O = GDP + phosphate + H(+). Functionally, required for accurate and efficient protein synthesis under certain stress conditions. May act as a fidelity factor of the translation reaction, by catalyzing a one-codon backward translocation of tRNAs on improperly translocated ribosomes. Back-translocation proceeds from a post-translocation (POST) complex to a pre-translocation (PRE) complex, thus giving elongation factor G a second chance to translocate the tRNAs correctly. Binds to ribosomes in a GTP-dependent manner. The chain is Elongation factor 4 from Anaeromyxobacter dehalogenans (strain 2CP-1 / ATCC BAA-258).